We begin with the raw amino-acid sequence, 233 residues long: 7-cyano-7-deazaguanine synthase (233 aa).

11 to 21 provides a ligand contact to ATP; it reads FSGGQDSTTCL. 4 residues coordinate Zn(2+): Cys199, Cys214, Cys217, and Cys220.

Belongs to the QueC family. Zn(2+) is required as a cofactor.

The enzyme catalyses 7-carboxy-7-deazaguanine + NH4(+) + ATP = 7-cyano-7-deazaguanine + ADP + phosphate + H2O + H(+). It functions in the pathway purine metabolism; 7-cyano-7-deazaguanine biosynthesis. Functionally, catalyzes the ATP-dependent conversion of 7-carboxy-7-deazaguanine (CDG) to 7-cyano-7-deazaguanine (preQ(0)). The chain is 7-cyano-7-deazaguanine synthase from Herminiimonas arsenicoxydans.